The following is a 151-amino-acid chain: Ribosome maturation factor RimP (151 aa).

The protein belongs to the RimP family.

Its subcellular location is the cytoplasm. In terms of biological role, required for maturation of 30S ribosomal subunits. The chain is Ribosome maturation factor RimP from Shewanella sp. (strain MR-4).